Consider the following 66-residue polypeptide: Protein translocase subunit SecE (66 aa).

A helical membrane pass occupies residues 29 to 49 (LVASTLVVVVAVFIFSPICLV).

It belongs to the SecE/SEC61-gamma family. As to quaternary structure, component of the Sec protein translocase complex. Heterotrimer consisting of SecY, SecE and SecG subunits. The heterotrimers can form oligomers, although 1 heterotrimer is thought to be able to translocate proteins. Interacts with the ribosome. Interacts with SecDF, and other proteins may be involved. Interacts with SecA.

Its subcellular location is the cell inner membrane. Functionally, essential subunit of the Sec protein translocation channel SecYEG. Clamps together the 2 halves of SecY. May contact the channel plug during translocation. In Rickettsia montanensis, this protein is Protein translocase subunit SecE.